Here is a 526-residue protein sequence, read N- to C-terminus: Peptide chain release factor 3 (526 aa).

Residues 8–277 (NKRRTFAIIS…GLTQWAPAPQ (270 aa)) form the tr-type G domain. GTP is bound by residues 17–24 (SHPDAGKT), 85–89 (DTPGH), and 139–142 (NKLD).

It belongs to the TRAFAC class translation factor GTPase superfamily. Classic translation factor GTPase family. PrfC subfamily.

The protein resides in the cytoplasm. In terms of biological role, increases the formation of ribosomal termination complexes and stimulates activities of RF-1 and RF-2. It binds guanine nucleotides and has strong preference for UGA stop codons. It may interact directly with the ribosome. The stimulation of RF-1 and RF-2 is significantly reduced by GTP and GDP, but not by GMP. This chain is Peptide chain release factor 3, found in Histophilus somni (strain 2336) (Haemophilus somnus).